We begin with the raw amino-acid sequence, 418 residues long: Galactooligosaccharides transport system permease protein GanP (418 aa).

The next 9 membrane-spanning stretches (helical) occupy residues 25 to 45 (IKGI…GDLL), 65 to 85 (VFLL…LAVY), 129 to 149 (LFIL…LAFT), 191 to 211 (VVWT…LAII), 226 to 246 (ILIL…AGLF), 279 to 299 (LILM…TGVL), 323 to 343 (YITL…QFTF), 357 to 379 (GGPA…IYKL), and 388 to 408 (LAAA…LWQF). One can recognise an ABC transmembrane type-1 domain in the interval 187–407 (LAWTVVWTLA…VFVISIALWQ (221 aa)).

This sequence belongs to the binding-protein-dependent transport system permease family. In terms of assembly, the complex is composed of two ATP-binding proteins (MsmX), two transmembrane proteins (GanP and GanQ) and a solute-binding protein (GanS).

It is found in the cell membrane. In terms of biological role, involved in galactan degradation. Part of the ABC transporter complex GanPQS involved in the uptake of galactooligosaccharides. Responsible for the translocation of the substrate across the membrane. This chain is Galactooligosaccharides transport system permease protein GanP (ganP), found in Bacillus subtilis (strain 168).